Here is a 340-residue protein sequence, read N- to C-terminus: MSSSQESTFTSASAAAQVNASALDLLPVYAKELIAGGAAGAFAKTAVAPLERVKILLQTRTEGFQSLGILQSLRKLWQYEGIRGFYKGNGASVLRIVPYAALHYMTYEQYRCWILNNSASSIGTGPVVDLLAGSAAGGTAVLCTYPLDLARTKLAYQVSNVGQTGNALGNSGQQQTYNGIKDVFKTVYKEGGARSLYRGVGPTLIGILPYAGLKFYIYEDLKSQVPDDYKDSVILKLSCGALAGLFGQTLTYPLDVVRRQMQVQSKQSQNSSDGFRIRGTFQGLLLIIRCQGWRQLFAGLSLNYVKVVPSVAIGFTTYDMMKALLGVPPRERVHASGGNK.

Transmembrane regions (helical) follow at residues 22–42, 85–105, 130–147, 199–219, 237–257, and 297–317; these read ALDLLPVYAKELIAGGAAGAF, FYKGNGASVLRIVPYAALHYM, LLAGSAAGGTAVLCTYPL, GVGPTLIGILPYAGLKFYIYE, LSCGALAGLFGQTLTYPLDVV, and FAGLSLNYVKVVPSVAIGFTT. Solcar repeat units lie at residues 27-113, 124-224, and 231-324; these read PVYA…YRCW, TGPV…LKSQ, and DSVI…MKAL.

It belongs to the mitochondrial carrier (TC 2.A.29) family. In terms of tissue distribution, expressed throughout the plant.

The protein localises to the mitochondrion inner membrane. Required for the accumulation of coenzyme A in the mitochondrial matrix. The polypeptide is Mitochondrial carrier protein CoAc1 (Zea mays (Maize)).